Reading from the N-terminus, the 122-residue chain is Nodulation protein NolR (122 aa).

The region spanning 15–109 (EKHEDAEIAA…ALSDIYGDDT (95 aa)) is the HTH arsR-type domain. The H-T-H motif DNA-binding region spans 49-68 (VGALAHKVGLSQSALSQHLS).

As to quaternary structure, binds to the operator site in homodimeric form.

Negative transacting factor controlling the nod regulon. May control the expression of nodD1, nodD2, nodD3 and nodABC genes. In Rhizobium meliloti (Ensifer meliloti), this protein is Nodulation protein NolR (nolR).